The sequence spans 1152 residues: Syntaxin-binding protein 5 (1152 aa).

Residues 14–35 (TAGSSSASQQQQQQQHPPGNRE) form a disordered region. Residues 17–28 (SSSASQQQQQQQ) show a composition bias toward low complexity. WD repeat units follow at residues 62–95 (SALAFDPVQKILAVGTQTGALRLFGRPGVECYCQ), 102–141 (VIQLQFLINEGALVSALADDTLHLWNLRQKRPAVLHSLKF), 146–182 (VTFCHLPFQSKWLYVGTERGNIHIVNVESFTLSGYVI), 201–235 (HISDNPMDEGKLLIGFESGTVVLWDLKSKKADYRY), 241–273 (IHSVAWHHEGKQFICSHSDGTLTIWNVRSPTKP), 295–337 (PILK…KSTA), 345–379 (IVDFLTLCETPYPNDFQEPYAVVVLLEKDLVLIDL), 401–478 (TCCE…YKLK), 506–620 (QIIS…ELVI), and 634–696 (TSLA…SGAG). Disordered regions lie at residues 557–596 (TPEGEQPPPLSTPVGSSTSQPIPPQSHPSTSSSSSDGLRD) and 675–731 (SNDP…QKVN). Phosphoserine is present on Ser-693. The span at 713–722 (SPTSGSSSPH) shows a compositional bias: low complexity. At Ser-724 the chain carries Phosphoserine; by PKA. Ser-760 carries the phosphoserine modification. A Phosphothreonine modification is found at Thr-763. Residue Ser-783 is modified to Phosphoserine. Thr-785 is modified (phosphothreonine). Ser-786 bears the Phosphoserine mark. 4 WD repeats span residues 795 to 852 (ISAL…SGTI), 861 to 935 (RMAF…QNCA), 940 to 984 (ITET…LDVY), and 998 to 1021 (CFANSGQALYLVSPTEIQRLTYSQ). Residues 879–893 (WTEHNVPEEKDEKEK) are compositionally biased toward basic and acidic residues. A disordered region spans residues 879-907 (WTEHNVPEEKDEKEKLKKRRPVSVSPSSS). 2 positions are modified to phosphoserine: Ser-901 and Ser-903. Thr-1040 is subject to Phosphothreonine. A phosphoserine mark is found at Ser-1059 and Ser-1132. The v-SNARE coiled-coil homology domain maps to 1087–1147 (GIEGVKGAAS…HEMMLKYKDK (61 aa)).

It belongs to the WD repeat L(2)GL family. In terms of assembly, part of a complex that contains STXBP5, STX4A and SNAP23. Interacts with STX1A and STX4A via its v-SNARE homology domain. Part of a complex that contains STX1, STXBP5, SNAP25 and SYT1. In terms of processing, phosphorylation by PKA reduces interaction with STX1A and enhances synaptic neurotransmitter release. As to expression, isoform 1 is detected in heart, brain, lung, liver, skeletal muscle, kidney and testis. Isoform 2 is detected in brain and in testis. Isoform 3 is detected in testis.

The protein resides in the cytoplasm. It is found in the cell membrane. Its subcellular location is the cytoplasmic vesicle membrane. The protein localises to the synapse. It localises to the cytoplasmic vesicle. The protein resides in the secretory vesicle. It is found in the synaptic vesicle. Its function is as follows. Inhibits translocation of GLUT4 from intracellular vesicles to the plasma membrane. Plays a regulatory role in calcium-dependent exocytosis and neurotransmitter release. Inhibits membrane fusion between transport vesicles and the plasma membrane. May modulate the assembly of trans-SNARE complexes between transport vesicles and the plasma membrane. Competes with STXBP1 for STX1 binding. The sequence is that of Syntaxin-binding protein 5 (Stxbp5) from Rattus norvegicus (Rat).